The chain runs to 82 residues: Polyketide biosynthesis acyl-carrier-protein AcpK (82 aa).

Positions 4 to 79 (QRIFEVLITN…ELAEVLYDKV (76 aa)) constitute a Carrier domain. S39 is modified (O-(pantetheine 4'-phosphoryl)serine).

4'-phosphopantetheine is transferred from CoA to a specific serine of apo-ACP by sfp.

It localises to the cytoplasm. It participates in antibiotic biosynthesis; bacillaene biosynthesis. Its function is as follows. Involved in some intermediate steps for the synthesis of the antibiotic polyketide bacillaene which is involved in secondary metabolism. The sequence is that of Polyketide biosynthesis acyl-carrier-protein AcpK (acpK) from Bacillus subtilis (strain 168).